The chain runs to 308 residues: HTH-type transcriptional activator AllS (308 aa).

The region spanning 2 to 59 is the HTH lysR-type domain; that stretch reads FDPETLRTFIAVAETGSFSKAAERLCKTTATISYRIKLLEENTGVALFFRTTRSVTLT. Residues 19-38 constitute a DNA-binding region (H-T-H motif); the sequence is FSKAAERLCKTTATISYRIK.

It belongs to the LysR transcriptional regulatory family.

Its function is as follows. Positive regulator essential for the expression of AllD operon. Binds to the AllD promoter. The protein is HTH-type transcriptional activator AllS (allS) of Escherichia coli O157:H7.